Reading from the N-terminus, the 301-residue chain is Protoheme IX farnesyltransferase (301 aa).

The next 9 membrane-spanning stretches (helical) occupy residues Phe20–Leu42, Val55–Phe75, Ala105–Trp125, Gln126–Ala146, Leu150–Val172, Phe176–Ile198, Met227–Val247, Val249–Met269, and Phe280–Phe300.

It belongs to the UbiA prenyltransferase family. Protoheme IX farnesyltransferase subfamily. In terms of assembly, interacts with CtaA.

It is found in the cell membrane. It carries out the reaction heme b + (2E,6E)-farnesyl diphosphate + H2O = Fe(II)-heme o + diphosphate. The protein operates within porphyrin-containing compound metabolism; heme O biosynthesis; heme O from protoheme: step 1/1. Converts heme B (protoheme IX) to heme O by substitution of the vinyl group on carbon 2 of heme B porphyrin ring with a hydroxyethyl farnesyl side group. The sequence is that of Protoheme IX farnesyltransferase from Listeria welshimeri serovar 6b (strain ATCC 35897 / DSM 20650 / CCUG 15529 / CIP 8149 / NCTC 11857 / SLCC 5334 / V8).